A 160-amino-acid chain; its full sequence is Endoribonuclease YbeY (160 aa).

3 residues coordinate Zn(2+): His112, His116, and His122.

This sequence belongs to the endoribonuclease YbeY family. Zn(2+) is required as a cofactor.

Its subcellular location is the cytoplasm. Functionally, single strand-specific metallo-endoribonuclease involved in late-stage 70S ribosome quality control and in maturation of the 3' terminus of the 16S rRNA. The chain is Endoribonuclease YbeY from Maricaulis maris (strain MCS10) (Caulobacter maris).